The following is a 224-amino-acid chain: 7-cyano-7-deazaguanine synthase (224 aa).

11–21 lines the ATP pocket; the sequence is FSGGQDSTTCL. Positions 190, 199, 202, and 205 each coordinate Zn(2+).

It belongs to the QueC family. Zn(2+) is required as a cofactor.

The enzyme catalyses 7-carboxy-7-deazaguanine + NH4(+) + ATP = 7-cyano-7-deazaguanine + ADP + phosphate + H2O + H(+). It participates in purine metabolism; 7-cyano-7-deazaguanine biosynthesis. Catalyzes the ATP-dependent conversion of 7-carboxy-7-deazaguanine (CDG) to 7-cyano-7-deazaguanine (preQ(0)). The protein is 7-cyano-7-deazaguanine synthase of Parabacteroides distasonis (strain ATCC 8503 / DSM 20701 / CIP 104284 / JCM 5825 / NCTC 11152).